Consider the following 173-residue polypeptide: MVQGVFVTGPPGVGKTTLIVKVTSRLKERGIRIVGFYTVEEREGGVRVGFRLVNVSNGEWRWLAHVNKVQGPMVGKYHVDVNSIEWGLTLLNQEGDLYVIDEVGPMEMKHPSFLRRVEDVVNSRRFLITIHVKMSNWVNSHLNLGSLIRLSYVNRDAAVDEVLNYLRTILNMA.

ATP is bound by residues 9–16 (GPPGVGKT) and 97–104 (LYVIDEVG).

Belongs to the THEP1 NTPase family.

The catalysed reaction is a ribonucleoside 5'-triphosphate + H2O = a ribonucleoside 5'-diphosphate + phosphate + H(+). In terms of biological role, has nucleotide phosphatase activity towards ATP, GTP, CTP, TTP and UTP. May hydrolyze nucleoside diphosphates with lower efficiency. This chain is Nucleoside-triphosphatase THEP1, found in Caldivirga maquilingensis (strain ATCC 700844 / DSM 13496 / JCM 10307 / IC-167).